A 579-amino-acid polypeptide reads, in one-letter code: MKLHMSKTYFLKKLIPSLTLFPVLTSYASSNKDVIESPQSKRYTIESIKQYISLFIGECVFISGQEATQDDSFFYSGYFVSIPVIADELIDNVIYIRGKNCTWKRKIDDFIDVSWFGAIGDGINDDSNAISRANIAAHNECLPLKFIPGHIYQVKNTYEIDVSKTSWFSSDLSTLKWFNDFNADFAIRLFSSQKDYSKRFQNVKVAIKSIAIIGAGIKNLLDSCAIKIGGDERNSSLFTIDSVSIQGWRTTLAFDNNSWRIKFCDCHFLWGNIIAPPGNKNSGECMVFDNCMFADNRSYTELHYGDWFFSKCSFDNHEVKLFGDANVFINQSHMENPGRKTTDFTIVSINSINSFASVIDSFIFISPTPKIINTPLFYVISDNENGLYVRNLRFQATENYNPSKGTENALVLVGGDGKSYLENVRVSLNNKSYLALNKNDSSVLMNSRFKDGLRYWDFNDGVSLQARISSNDSETIVFSKNGASLSQSVLVKSTGILSGGMMLKIVSGDLKLTLECYDSLDNNITTREWNCSASDYSDWSWVRFGEKLPDNIRKIKFYCKSFGQSVDVKLSTILMDIIS.

This is an uncharacterized protein from Klebsiella pneumoniae.